A 403-amino-acid polypeptide reads, in one-letter code: Subtilisin-like protease CPC735_035780 (403 aa).

An N-terminal signal peptide occupies residues Met-1–Ala-19. The propeptide occupies Ala-20–Thr-117. The Inhibitor I9 domain occupies Ser-35–Leu-116. The region spanning Ser-127–Arg-403 is the Peptidase S8 domain. Catalysis depends on charge relay system residues Asp-159 and His-190. Residues Asn-233 and Asn-251 are each glycosylated (N-linked (GlcNAc...) asparagine). The active-site Charge relay system is Ser-349. Asn-399 carries N-linked (GlcNAc...) asparagine glycosylation.

It belongs to the peptidase S8 family.

It is found in the secreted. Its function is as follows. Secreted subtilisin-like serine protease with keratinolytic activity that contributes to pathogenicity. This Coccidioides posadasii (strain C735) (Valley fever fungus) protein is Subtilisin-like protease CPC735_035780.